A 206-amino-acid polypeptide reads, in one-letter code: Large ribosomal subunit protein uL4 (206 aa).

Residues 47 to 94 (NRAQKGRSEIAKSTRKPFRQKGTGNARAGMASSPLWRGGGKIFPNSPD) form a disordered region.

The protein belongs to the universal ribosomal protein uL4 family. In terms of assembly, part of the 50S ribosomal subunit.

Functionally, one of the primary rRNA binding proteins, this protein initially binds near the 5'-end of the 23S rRNA. It is important during the early stages of 50S assembly. It makes multiple contacts with different domains of the 23S rRNA in the assembled 50S subunit and ribosome. Its function is as follows. Forms part of the polypeptide exit tunnel. This chain is Large ribosomal subunit protein uL4, found in Azoarcus sp. (strain BH72).